We begin with the raw amino-acid sequence, 197 residues long: Phosphoheptose isomerase (197 aa).

One can recognise an SIS domain in the interval 34–196; sequence MVQCLLGGNK…DRTLFPQDDQ (163 aa). Substrate is bound at residue 49-51; it reads NGG. Zn(2+)-binding residues include H58 and E62. Residues E62, 91-92, 117-119, S122, and Q172 contribute to the substrate site; these read ND and STS. Residues Q172 and H180 each coordinate Zn(2+).

Belongs to the SIS family. GmhA subfamily. Homotetramer. The cofactor is Zn(2+).

Its subcellular location is the cytoplasm. The catalysed reaction is 2 D-sedoheptulose 7-phosphate = D-glycero-alpha-D-manno-heptose 7-phosphate + D-glycero-beta-D-manno-heptose 7-phosphate. It participates in carbohydrate biosynthesis; D-glycero-D-manno-heptose 7-phosphate biosynthesis; D-glycero-alpha-D-manno-heptose 7-phosphate and D-glycero-beta-D-manno-heptose 7-phosphate from sedoheptulose 7-phosphate: step 1/1. Catalyzes the isomerization of sedoheptulose 7-phosphate in D-glycero-D-manno-heptose 7-phosphate. This is Phosphoheptose isomerase from Shewanella loihica (strain ATCC BAA-1088 / PV-4).